Reading from the N-terminus, the 296-residue chain is Ribosomal RNA small subunit methyltransferase H (296 aa).

S-adenosyl-L-methionine-binding positions include 41–43 (GGH), Asp-60, Phe-87, Asp-103, and Gln-110.

This sequence belongs to the methyltransferase superfamily. RsmH family.

The protein localises to the cytoplasm. The catalysed reaction is cytidine(1402) in 16S rRNA + S-adenosyl-L-methionine = N(4)-methylcytidine(1402) in 16S rRNA + S-adenosyl-L-homocysteine + H(+). In terms of biological role, specifically methylates the N4 position of cytidine in position 1402 (C1402) of 16S rRNA. The protein is Ribosomal RNA small subunit methyltransferase H of Synechococcus elongatus (strain ATCC 33912 / PCC 7942 / FACHB-805) (Anacystis nidulans R2).